The chain runs to 599 residues: Elongation factor 4 (599 aa).

A tr-type G domain is found at 2 to 185 (KYIRNFSIIA…RIIIDIPVPQ (184 aa)). GTP is bound by residues 14 to 19 (NHGKST) and 132 to 135 (NKID).

Belongs to the TRAFAC class translation factor GTPase superfamily. Classic translation factor GTPase family. LepA subfamily.

Its subcellular location is the cell inner membrane. It carries out the reaction GTP + H2O = GDP + phosphate + H(+). Required for accurate and efficient protein synthesis under certain stress conditions. May act as a fidelity factor of the translation reaction, by catalyzing a one-codon backward translocation of tRNAs on improperly translocated ribosomes. Back-translocation proceeds from a post-translocation (POST) complex to a pre-translocation (PRE) complex, thus giving elongation factor G a second chance to translocate the tRNAs correctly. Binds to ribosomes in a GTP-dependent manner. This chain is Elongation factor 4, found in Blochmanniella floridana.